Consider the following 231-residue polypeptide: ATP phosphoribosyltransferase (231 aa).

This sequence belongs to the ATP phosphoribosyltransferase family. Short subfamily. As to quaternary structure, heteromultimer composed of HisG and HisZ subunits.

The protein resides in the cytoplasm. The enzyme catalyses 1-(5-phospho-beta-D-ribosyl)-ATP + diphosphate = 5-phospho-alpha-D-ribose 1-diphosphate + ATP. Its pathway is amino-acid biosynthesis; L-histidine biosynthesis; L-histidine from 5-phospho-alpha-D-ribose 1-diphosphate: step 1/9. Its function is as follows. Catalyzes the condensation of ATP and 5-phosphoribose 1-diphosphate to form N'-(5'-phosphoribosyl)-ATP (PR-ATP). Has a crucial role in the pathway because the rate of histidine biosynthesis seems to be controlled primarily by regulation of HisG enzymatic activity. The polypeptide is ATP phosphoribosyltransferase (Brucella suis (strain ATCC 23445 / NCTC 10510)).